Reading from the N-terminus, the 433-residue chain is Glutamate-1-semialdehyde 2,1-aminomutase (433 aa).

Residue K273 is modified to N6-(pyridoxal phosphate)lysine.

This sequence belongs to the class-III pyridoxal-phosphate-dependent aminotransferase family. HemL subfamily. In terms of assembly, homodimer. It depends on pyridoxal 5'-phosphate as a cofactor.

The protein resides in the cytoplasm. The catalysed reaction is (S)-4-amino-5-oxopentanoate = 5-aminolevulinate. Its pathway is porphyrin-containing compound metabolism; protoporphyrin-IX biosynthesis; 5-aminolevulinate from L-glutamyl-tRNA(Glu): step 2/2. The protein operates within porphyrin-containing compound metabolism; chlorophyll biosynthesis. The sequence is that of Glutamate-1-semialdehyde 2,1-aminomutase from Microcystis aeruginosa (strain NIES-843 / IAM M-2473).